A 953-amino-acid polypeptide reads, in one-letter code: Calcium-transporting ATPase type 2C member 1 (953 aa).

Over 1–104 the chain is Cytoplasmic; sequence MDNLLPQSRF…NEFDISEDEP (104 aa). Residues 105–125 form a helical membrane-spanning segment; that stretch reads LWKKYISQFKNPLIMLLLASA. Residues 126–138 are Lumenal-facing; that stretch reads VISVLMHQFDDAV. A helical transmembrane segment spans residues 139–157; that stretch reads SITVAILIVVTVAFVQEYR. Residues 158 to 296 are Cytoplasmic-facing; the sequence is SEKSLEELSK…APKTPLQKSM (139 aa). A helical membrane pass occupies residues 297–316; the sequence is DLLGKQLSFYSFGIIGIIML. Over 317 to 328 the chain is Lumenal; it reads VGWLLGKDILEM. A helical membrane pass occupies residues 329-346; it reads FTISVSLAVAAIPEGLPI. Ca(2+) contacts are provided by Val337, Ala338, Ile340, and Glu342. Residues 347–733 are Cytoplasmic-facing; that stretch reads VVTVTLALGV…EEGKGIYNNI (387 aa). Residue Asp384 is the 4-aspartylphosphate intermediate of the active site. Mg(2+) contacts are provided by Asp678 and Asp682. The chain crosses the membrane as a helical span at residues 734-753; sequence KNFVRFQLSTSIAALTLISL. The Lumenal portion of the chain corresponds to 754-763; it reads ATLMNFPNPL. Residues 764-784 traverse the membrane as a helical segment; the sequence is NAMQILWINIIMDGPPAQSLG. Ca(2+) is bound by residues Asn772 and Asp776. The Cytoplasmic portion of the chain corresponds to 785-804; that stretch reads VEPVDKDVIRKPPRNWKDSI. Residues 805–824 traverse the membrane as a helical segment; the sequence is LTKNLILKILVSSIIIVCGT. The Lumenal segment spans residues 825–842; the sequence is LFVFWRELRDNVITPRDT. Residues 843–862 form a helical membrane-spanning segment; the sequence is TMTFTCFVFFDMFNALSSRS. Over 863–875 the chain is Cytoplasmic; that stretch reads QTKSVFEIGLCSN. A helical membrane pass occupies residues 876-894; that stretch reads KMFCYAVLGSIMGQLLVIY. Over 895–909 the chain is Lumenal; it reads FPPLQKVFQTESLSI. A helical transmembrane segment spans residues 910 to 930; sequence LDLLFLLGLTSSVCIVAEIIK. At 931–953 the chain is on the cytoplasmic side; that stretch reads KVERSREKIQKPVSSTSSSFLEV.

The protein belongs to the cation transport ATPase (P-type) (TC 3.A.3) family. Type IIA subfamily. As to quaternary structure, monomer. Homodimer.

The protein localises to the golgi apparatus. It localises to the trans-Golgi network membrane. The protein resides in the golgi stack membrane. It carries out the reaction Ca(2+)(in) + ATP + H2O = Ca(2+)(out) + ADP + phosphate + H(+). The catalysed reaction is Mn(2+)(in) + ATP + H2O = Mn(2+)(out) + ADP + phosphate + H(+). Functionally, ATP-driven pump that supplies the Golgi apparatus with Ca(2+) and Mn(2+) ions, both essential cofactors for processing and trafficking of newly synthesized proteins in the secretory pathway. Within a catalytic cycle, acquires Ca(2+) or Mn(2+) ions on the cytoplasmic side of the membrane and delivers them to the lumenal side. The transfer of ions across the membrane is coupled to ATP hydrolysis and is associated with a transient phosphorylation that shifts the pump conformation from inward-facing to outward-facing state. Plays a primary role in the maintenance of Ca(2+) homeostasis in the trans-Golgi compartment with a functional impact on Golgi and post-Golgi protein sorting as well as a structural impact on cisternae morphology. Responsible for loading the Golgi stores with Ca(2+) ions in keratinocytes, contributing to keratinocyte differentiation and epidermis integrity. Participates in Ca(2+) and Mn(2+) ions uptake into the Golgi store of hippocampal neurons and regulates protein trafficking required for neural polarity. May also play a role in the maintenance of Ca(2+) and Mn(2+) homeostasis and signaling in the cytosol while preventing cytotoxicity. The polypeptide is Calcium-transporting ATPase type 2C member 1 (ATP2C1) (Bos taurus (Bovine)).